Consider the following 503-residue polypeptide: Transcription termination/antitermination protein NusA (503 aa).

The region spanning 139 to 203 (GDIINGIVKR…KGPQIFLSRV (65 aa)) is the S1 motif domain. A KH domain is found at 308 to 378 (SHKVEVVVSQ…LDVEEVIGQL (71 aa)).

Belongs to the NusA family. Monomer. Binds directly to the core enzyme of the DNA-dependent RNA polymerase and to nascent RNA.

The protein localises to the cytoplasm. Functionally, participates in both transcription termination and antitermination. This is Transcription termination/antitermination protein NusA from Rickettsia prowazekii (strain Madrid E).